The sequence spans 142 residues: Large ribosomal subunit protein uL13c (142 aa).

This sequence belongs to the universal ribosomal protein uL13 family. As to quaternary structure, part of the 50S ribosomal subunit.

It localises to the plastid. The protein resides in the chloroplast. This chain is Large ribosomal subunit protein uL13c, found in Pyropia yezoensis (Susabi-nori).